A 739-amino-acid chain; its full sequence is DNA ligase (739 aa).

34–38 is an NAD(+) binding site; the sequence is DADYD. Residues 49-59 are compositionally biased toward basic and acidic residues; sequence ARFPHLKRPDS. Residues 49 to 70 form a disordered region; sequence ARFPHLKRPDSPSEQVGARPGE. Residues 83–84 and Glu-117 each bind NAD(+); that span reads SL. Lys-119 functions as the N6-AMP-lysine intermediate in the catalytic mechanism. Positions 140, 175, 291, and 315 each coordinate NAD(+). Cys-420, Cys-423, Cys-438, and Cys-444 together coordinate Zn(2+). A BRCT domain is found at 660–739; sequence ARDSPVAGKT…DGWLKLIEGL (80 aa).

The protein belongs to the NAD-dependent DNA ligase family. LigA subfamily. It depends on Mg(2+) as a cofactor. Mn(2+) is required as a cofactor.

The enzyme catalyses NAD(+) + (deoxyribonucleotide)n-3'-hydroxyl + 5'-phospho-(deoxyribonucleotide)m = (deoxyribonucleotide)n+m + AMP + beta-nicotinamide D-nucleotide.. DNA ligase that catalyzes the formation of phosphodiester linkages between 5'-phosphoryl and 3'-hydroxyl groups in double-stranded DNA using NAD as a coenzyme and as the energy source for the reaction. It is essential for DNA replication and repair of damaged DNA. This Ruegeria pomeroyi (strain ATCC 700808 / DSM 15171 / DSS-3) (Silicibacter pomeroyi) protein is DNA ligase.